Here is a 191-residue protein sequence, read N- to C-terminus: Small ribosomal subunit protein uS5 (191 aa).

Residues 1 to 20 (MAGERERGGRERSRDREERD) are disordered. In terms of domain architecture, S5 DRBM spans 23 to 86 (FVDKLVHINR…ESAKRNLTRV (64 aa)).

The protein belongs to the universal ribosomal protein uS5 family. As to quaternary structure, part of the 30S ribosomal subunit. Contacts proteins S4 and S8.

In terms of biological role, with S4 and S12 plays an important role in translational accuracy. Functionally, located at the back of the 30S subunit body where it stabilizes the conformation of the head with respect to the body. This is Small ribosomal subunit protein uS5 from Nitrobacter winogradskyi (strain ATCC 25391 / DSM 10237 / CIP 104748 / NCIMB 11846 / Nb-255).